The primary structure comprises 194 residues: MKTILSSETMDIPDGVAIKVNAKVIEVEGPRGKLTRDFKHLNLDFQLIKDQVTGKRQLKIDSWFGSRKTSASIRTALSHVDNLIAGVTQGFLYRMRFVYAHFPINASIDGNNKSIEIRNFLGEKKVRKVEMLDGVKIVRSEKVKDEIILEGNDIELVSRSCALINQKCHVKKKDIRKFLDGIYVSEKGKIAVEE.

T75 carries the post-translational modification Phosphothreonine.

Belongs to the universal ribosomal protein uL6 family.

The sequence is that of Large ribosomal subunit protein uL6x (RPL9D) from Arabidopsis thaliana (Mouse-ear cress).